We begin with the raw amino-acid sequence, 332 residues long: D-xylose-binding periplasmic protein (332 aa).

The signal sequence occupies residues 1-23 (MKIKSALLTLVGALTVFSSSAHS).

The protein belongs to the bacterial solute-binding protein 2 family.

Its subcellular location is the periplasm. Functionally, involved in the high-affinity D-xylose membrane transport system. Binds with high affinity to xylose. This is D-xylose-binding periplasmic protein (xylF) from Haemophilus influenzae (strain ATCC 51907 / DSM 11121 / KW20 / Rd).